A 619-amino-acid chain; its full sequence is Dihydroxy-acid dehydratase (619 aa).

Aspartate 81 is a binding site for Mg(2+). Cysteine 122 contacts [2Fe-2S] cluster. Aspartate 123 and lysine 124 together coordinate Mg(2+). Residue lysine 124 is modified to N6-carboxylysine. Cysteine 198 contacts [2Fe-2S] cluster. Glutamate 494 contributes to the Mg(2+) binding site. Serine 520 acts as the Proton acceptor in catalysis.

Belongs to the IlvD/Edd family. Homodimer. Requires [2Fe-2S] cluster as cofactor. The cofactor is Mg(2+).

The enzyme catalyses (2R)-2,3-dihydroxy-3-methylbutanoate = 3-methyl-2-oxobutanoate + H2O. It catalyses the reaction (2R,3R)-2,3-dihydroxy-3-methylpentanoate = (S)-3-methyl-2-oxopentanoate + H2O. It participates in amino-acid biosynthesis; L-isoleucine biosynthesis; L-isoleucine from 2-oxobutanoate: step 3/4. It functions in the pathway amino-acid biosynthesis; L-valine biosynthesis; L-valine from pyruvate: step 3/4. Functions in the biosynthesis of branched-chain amino acids. Catalyzes the dehydration of (2R,3R)-2,3-dihydroxy-3-methylpentanoate (2,3-dihydroxy-3-methylvalerate) into 2-oxo-3-methylpentanoate (2-oxo-3-methylvalerate) and of (2R)-2,3-dihydroxy-3-methylbutanoate (2,3-dihydroxyisovalerate) into 2-oxo-3-methylbutanoate (2-oxoisovalerate), the penultimate precursor to L-isoleucine and L-valine, respectively. In Neisseria meningitidis serogroup A / serotype 4A (strain DSM 15465 / Z2491), this protein is Dihydroxy-acid dehydratase.